The chain runs to 807 residues: 1,4-alpha-glucan branching enzyme GlgB (807 aa).

The Nucleophile role is filled by Asp-405. Glu-458 acts as the Proton donor in catalysis.

Belongs to the glycosyl hydrolase 13 family. GlgB subfamily. Monomer.

The catalysed reaction is Transfers a segment of a (1-&gt;4)-alpha-D-glucan chain to a primary hydroxy group in a similar glucan chain.. It functions in the pathway glycan biosynthesis; glycogen biosynthesis. In terms of biological role, catalyzes the formation of the alpha-1,6-glucosidic linkages in glycogen by scission of a 1,4-alpha-linked oligosaccharide from growing alpha-1,4-glucan chains and the subsequent attachment of the oligosaccharide to the alpha-1,6 position. The chain is 1,4-alpha-glucan branching enzyme GlgB from Histophilus somni (strain 129Pt) (Haemophilus somnus).